We begin with the raw amino-acid sequence, 508 residues long: Catalase (508 aa).

A signal peptide spans 1-21 (MHMSKSFLLISMGLASISVHA). Active-site residues include H72 and N145. Y353 contacts heme. Residues 373 to 392 (PKSPVANHNQDGPSNNSTGL) are compositionally biased toward polar residues. Residues 373 to 396 (PKSPVANHNQDGPSNNSTGLGNVD) are disordered.

It belongs to the catalase family. Requires heme as cofactor.

Its subcellular location is the periplasm. The catalysed reaction is 2 H2O2 = O2 + 2 H2O. Decomposes hydrogen peroxide into water and oxygen; serves to protect cells from the toxic effects of hydrogen peroxide. The sequence is that of Catalase from Vibrio vulnificus (strain CMCP6).